Here is a 99-residue protein sequence, read N- to C-terminus: Essential MCU regulator, mitochondrial (99 aa).

Residues 1–39 (MAARVGVLSVAGFRAAARAGGLLRASKQSSAVSHVPCRT) constitute a mitochondrion transit peptide. The Mitochondrial matrix segment spans residues 40–57 (AIATSAGTVLPKPEKVSF). The chain crosses the membrane as a helical span at residues 58 to 77 (GLLRVFTVVIPFLYIGTLIS). Residues 78-99 (KNFAALLEEHDIFVPEDDDDDD) are Mitochondrial intermembrane-facing.

The protein belongs to the SMDT1/EMRE family. Component of the uniplex complex.

The protein localises to the mitochondrion inner membrane. Functionally, essential regulatory subunit of the mitochondrial calcium uniporter complex (uniplex), a complex that mediates calcium uptake into mitochondria. Required to bridge the calcium-sensing proteins micu1 with the calcium-conducting subunit mcu. Acts by mediating activation of mcu and retention of micu1 to the mcu pore, in order to ensure tight regulation of the uniplex complex and appropriate responses to intracellular calcium signaling. The polypeptide is Essential MCU regulator, mitochondrial (Xenopus tropicalis (Western clawed frog)).